The sequence spans 545 residues: Membrane protein insertase YidC (545 aa).

6 helical membrane-spanning segments follow: residues 10-30 (AIYL…IFFS), 319-339 (LLYF…NVIP), 341-361 (WGLS…PLTF), 407-427 (LGGC…YGLV), 467-487 (ILPF…SNVS), and 502-522 (MPIM…IYWI).

It belongs to the OXA1/ALB3/YidC family. Type 1 subfamily. Interacts with the Sec translocase complex via SecD. Specifically interacts with transmembrane segments of nascent integral membrane proteins during membrane integration.

The protein resides in the cell inner membrane. Its function is as follows. Required for the insertion and/or proper folding and/or complex formation of integral membrane proteins into the membrane. Involved in integration of membrane proteins that insert both dependently and independently of the Sec translocase complex, as well as at least some lipoproteins. Aids folding of multispanning membrane proteins. The chain is Membrane protein insertase YidC from Borrelia hermsii (strain HS1 / DAH).